The sequence spans 181 residues: uncharacterized protein (181 aa).

Helical transmembrane passes span 24–46 (IAAVLISTSFVLFGFLALVLLNV) and 55–77 (GIVAIVSLIAIWVLMTAGVYILL).

It is found in the cell membrane. This is an uncharacterized protein from Archaeoglobus fulgidus (strain ATCC 49558 / DSM 4304 / JCM 9628 / NBRC 100126 / VC-16).